The sequence spans 84 residues: Large ribosomal subunit protein bL27 (84 aa).

The interval 1 to 22 (MAHKKAGGSTRNGRDSESKRLG) is disordered.

It belongs to the bacterial ribosomal protein bL27 family.

The sequence is that of Large ribosomal subunit protein bL27 from Shewanella frigidimarina (strain NCIMB 400).